The chain runs to 336 residues: tRNA N6-adenosine threonylcarbamoyltransferase (336 aa).

His114 and His118 together coordinate Fe cation. Substrate-binding positions include 136-140, Asp169, Gly182, Asp186, and Asn275; that span reads LVSGG. Residue Asp301 participates in Fe cation binding.

This sequence belongs to the KAE1 / TsaD family. It depends on Fe(2+) as a cofactor.

It is found in the cytoplasm. The enzyme catalyses L-threonylcarbamoyladenylate + adenosine(37) in tRNA = N(6)-L-threonylcarbamoyladenosine(37) in tRNA + AMP + H(+). Required for the formation of a threonylcarbamoyl group on adenosine at position 37 (t(6)A37) in tRNAs that read codons beginning with adenine. Is involved in the transfer of the threonylcarbamoyl moiety of threonylcarbamoyl-AMP (TC-AMP) to the N6 group of A37, together with TsaE and TsaB. TsaD likely plays a direct catalytic role in this reaction. In Streptococcus pneumoniae (strain JJA), this protein is tRNA N6-adenosine threonylcarbamoyltransferase.